Reading from the N-terminus, the 160-residue chain is D-aminoacyl-tRNA deacylase 2 (160 aa).

The short motif at 152–153 (GP) is the Gly-transPro motif, allows the protein to recognize chirality of D-amino acids element.

The protein belongs to the DTD family. As to quaternary structure, homodimer.

Its subcellular location is the cytoplasm. It catalyses the reaction a D-aminoacyl-tRNA + H2O = a tRNA + a D-alpha-amino acid + H(+). The enzyme catalyses glycyl-tRNA(Ala) + H2O = tRNA(Ala) + glycine + H(+). The catalysed reaction is D-tyrosyl-tRNA(Tyr) + H2O = D-tyrosine + tRNA(Tyr). It carries out the reaction L-alanyl-tRNA(Thr) + H2O = tRNA(Thr) + L-alanine + H(+). Deacylates mischarged D-aminoacyl-tRNAs. Also deacylates mischarged glycyl-tRNA(Ala), protecting cells against glycine mischarging by AlaRS. Probably acts by rejecting L-amino acids from its binding site rather than specific recognition of D-amino acids. Catalyzes the hydrolysis of D-tyrosyl-tRNA(Tyr), has no activity on correctly charged L-tyrosyl-tRNA(Tyr). By recycling D-aminoacyl-tRNA to D-amino acids and free tRNA molecules, this enzyme counteracts the toxicity associated with the formation of D-aminoacyl-tRNA entities in vivo and helps enforce protein L-homochirality. In contrast to DTD1, deacylates L-Ala mischarged on tRNA(Thr)(G4.U69) by alanine-tRNA ligase AARS. Can deacylate L-Ala due to a relaxed specificity for substrate chirality caused by the trans conformation of the Gly-Pro motif in the active site. Also hydrolyzes correctly charged, achiral, glycyl-tRNA(Gly) in vitro, although in vivo eef1a1a/EF-Tu may protect cognate achiral glycyl-tRNA(Gly) from DTD2-mediated deacetylation. This Danio rerio (Zebrafish) protein is D-aminoacyl-tRNA deacylase 2 (dtd2).